Here is a 1210-residue protein sequence, read N- to C-terminus: uncharacterized protein (1210 aa).

This sequence to E.coli molybdate metabolism regulator (MolR).

This is an uncharacterized protein from Escherichia coli (strain K12).